Consider the following 573-residue polypeptide: L-lactate dehydrogenase (cytochrome) (573 aa).

A mitochondrion-targeting transit peptide spans 1-73 (MFKSQLRTAT…LYQKDKFISA (73 aa)). In terms of domain architecture, Cytochrome b5 heme-binding spans 80-157 (DIELTPEIVS…PPEKHLGPLV (78 aa)). Residues His-115, His-138, and Tyr-208 each coordinate heme b. The region spanning 182-542 (PPLSQMINLH…TPELLDTRSI (361 aa)) is the FMN hydroxy acid dehydrogenase domain. Residue Tyr-208 participates in pyruvate binding. Residues 260–263 (SATA), Ser-290, and Gln-313 contribute to the FMN site. A pyruvate-binding site is contributed by Tyr-315. Thr-341 is an FMN binding site. Lys-357 is a heme b binding site. Lys-408 is an FMN binding site. His-432 and Arg-435 together coordinate pyruvate. FMN-binding positions include 468–472 (DGGVR) and 491–492 (GR).

It in the N-terminal section; belongs to the cytochrome b5 family. This sequence in the C-terminal section; belongs to the FMN-dependent alpha-hydroxy acid dehydrogenase family. Homotetramer. FMN serves as cofactor. It depends on heme b as a cofactor.

It is found in the mitochondrion intermembrane space. The catalysed reaction is (S)-lactate + 2 Fe(III)-[cytochrome c] = 2 Fe(II)-[cytochrome c] + pyruvate + 2 H(+). In terms of biological role, catalyzes the oxidation of (S)-lactate (L-lactate) to pyruvate with subsequent transfer of electrons to cytochrome c. Is involved in the utilization of (S)-lactate as a sole source of carbon for growth. This Wickerhamomyces anomalus (Yeast) protein is L-lactate dehydrogenase (cytochrome) (CYB2).